A 688-amino-acid chain; its full sequence is UvrABC system protein C (688 aa).

Positions 11–90 (LTPGVYLYKD…IKKHRPRYNI (80 aa)) constitute a GIY-YIG domain. Positions 200–235 (GELVDALRTEMEAASQGLDFERAAVLRDRIRALERT) constitute a UVR domain.

It belongs to the UvrC family. Interacts with UvrB in an incision complex.

The protein resides in the cytoplasm. In terms of biological role, the UvrABC repair system catalyzes the recognition and processing of DNA lesions. UvrC both incises the 5' and 3' sides of the lesion. The N-terminal half is responsible for the 3' incision and the C-terminal half is responsible for the 5' incision. This Nitratidesulfovibrio vulgaris (strain ATCC 29579 / DSM 644 / CCUG 34227 / NCIMB 8303 / VKM B-1760 / Hildenborough) (Desulfovibrio vulgaris) protein is UvrABC system protein C.